A 257-amino-acid chain; its full sequence is Phycoerythrobilin:ferredoxin oxidoreductase (257 aa).

It belongs to the HY2 family.

The catalysed reaction is (3Z)-phycoerythrobilin + oxidized 2[4Fe-4S]-[ferredoxin] = 15,16-dihydrobiliverdin + reduced 2[4Fe-4S]-[ferredoxin] + 2 H(+). Its function is as follows. Catalyzes the two-electron reduction of the C2 and C3(1) diene system of 15,16-dihydrobiliverdin. The sequence is that of Phycoerythrobilin:ferredoxin oxidoreductase from Synechococcus sp. (strain CC9311).